A 139-amino-acid chain; its full sequence is Mannose-specific lectin (139 aa).

The region spanning 1 to 109 (DNILYSGETL…ARWATGTNIH (109 aa)) is the Bulb-type lectin domain. Alpha-D-mannopyranose is bound by residues glutamine 26, aspartate 28, asparagine 30, tyrosine 34, aspartate 37, lysine 38, tryptophan 41, alanine 42, asparagine 44, glutamine 57, aspartate 59, asparagine 61, tyrosine 65, isoleucine 72, tryptophan 73, asparagine 76, asparagine 83, glutamine 89, aspartate 91, asparagine 93, tyrosine 97, and tryptophan 102. A disulfide bridge links cysteine 29 with cysteine 52.

Homotetramer; antiparallel. Detected in bulbs (at protein level).

The protein localises to the secreted. Functionally, mannose-specific lectin. Displays antiviral activity and therefore may contribute to defense against infections. Shows agglutinating activity towards rabbit erythrocytes. In Narcissus tazetta (Cream narcissus), this protein is Mannose-specific lectin.